We begin with the raw amino-acid sequence, 232 residues long: MVKFKAIRGVAFDLDGTLVDSAPGLARAIDMALAHQGLPAAGEALVSTWIGNGADVLVERALHWAGREHNAQLVAQTRELFDHYYAKTVEQGSQLFPQVKATLAQLAANGLPIGLITNKPTPFVAPLLTSLGISDYFSVIIGGDDVVVKKPHPAPLYLLLGKLGLHAREMLFVGDSRNDIMAAQAAGCPCIGLTYGYNYGEAIATSHPDCVLAHFADLLPAIGLPSLKDQEV.

Asp-13 functions as the Nucleophile in the catalytic mechanism. Positions 13, 15, and 175 each coordinate Mg(2+).

The protein belongs to the HAD-like hydrolase superfamily. CbbY/CbbZ/Gph/YieH family. In terms of assembly, monomer. The cofactor is Mg(2+). Requires chloride as cofactor.

It catalyses the reaction 2-phosphoglycolate + H2O = glycolate + phosphate. The protein operates within organic acid metabolism; glycolate biosynthesis; glycolate from 2-phosphoglycolate: step 1/1. In terms of biological role, specifically catalyzes the dephosphorylation of 2-phosphoglycolate. Is involved in the dissimilation of the intracellular 2-phosphoglycolate formed during the DNA repair of 3'-phosphoglycolate ends, a major class of DNA lesions induced by oxidative stress. The sequence is that of Phosphoglycolate phosphatase from Yersinia pestis.